We begin with the raw amino-acid sequence, 243 residues long: MKHFIILFLLLFVTAGCEGRGYEDVVAFGDSNTRGSNWDYRDYPKAQQWVNILKTAERGNLDILNAGIGGQTTEDARLRFQTDVLDQKPKYLFIMFGTNDAAILTEGKPRVSKQRFRENLVYFIEESRKHGIKPILMTCIPIIEGNGKHHLFYYSRYQAAAFEPKGGARKWHNSYNDITRDVSKRLDVPLVDNWKHFIEADGGKATDEALIQSGLIDPSGNHMTPKGARIVYEGIQDGQILQR.

The first 16 residues, Met1 to Gly16, serve as a signal peptide directing secretion. Cys17 carries N-palmitoyl cysteine lipidation. The S-diacylglycerol cysteine moiety is linked to residue Cys17.

Its subcellular location is the cell membrane. This is an uncharacterized protein from Bacillus subtilis (strain 168).